The following is a 373-amino-acid chain: Queuine tRNA-ribosyltransferase (373 aa).

Catalysis depends on Asp-90, which acts as the Proton acceptor. Residues 90–94 (DSGGF), Asp-144, Gln-193, and Gly-220 contribute to the substrate site. The interval 251-257 (GVGTPED) is RNA binding. The Nucleophile role is filled by Asp-270. Positions 275–279 (TRNAR) are RNA binding; important for wobble base 34 recognition. Zn(2+) is bound by residues Cys-308, Cys-310, Cys-313, and His-339.

The protein belongs to the queuine tRNA-ribosyltransferase family. In terms of assembly, homodimer. Within each dimer, one monomer is responsible for RNA recognition and catalysis, while the other monomer binds to the replacement base PreQ1. It depends on Zn(2+) as a cofactor.

It catalyses the reaction 7-aminomethyl-7-carbaguanine + guanosine(34) in tRNA = 7-aminomethyl-7-carbaguanosine(34) in tRNA + guanine. It participates in tRNA modification; tRNA-queuosine biosynthesis. Functionally, catalyzes the base-exchange of a guanine (G) residue with the queuine precursor 7-aminomethyl-7-deazaguanine (PreQ1) at position 34 (anticodon wobble position) in tRNAs with GU(N) anticodons (tRNA-Asp, -Asn, -His and -Tyr). Catalysis occurs through a double-displacement mechanism. The nucleophile active site attacks the C1' of nucleotide 34 to detach the guanine base from the RNA, forming a covalent enzyme-RNA intermediate. The proton acceptor active site deprotonates the incoming PreQ1, allowing a nucleophilic attack on the C1' of the ribose to form the product. After dissociation, two additional enzymatic reactions on the tRNA convert PreQ1 to queuine (Q), resulting in the hypermodified nucleoside queuosine (7-(((4,5-cis-dihydroxy-2-cyclopenten-1-yl)amino)methyl)-7-deazaguanosine). This Campylobacter jejuni subsp. jejuni serotype O:6 (strain 81116 / NCTC 11828) protein is Queuine tRNA-ribosyltransferase.